The sequence spans 250 residues: Ribosomal RNA small subunit methyltransferase J (250 aa).

S-adenosyl-L-methionine contacts are provided by residues 96–97 and aspartate 168; that span reads RD.

It belongs to the methyltransferase superfamily. RsmJ family.

It is found in the cytoplasm. The catalysed reaction is guanosine(1516) in 16S rRNA + S-adenosyl-L-methionine = N(2)-methylguanosine(1516) in 16S rRNA + S-adenosyl-L-homocysteine + H(+). Specifically methylates the guanosine in position 1516 of 16S rRNA. This is Ribosomal RNA small subunit methyltransferase J from Neisseria meningitidis serogroup B (strain ATCC BAA-335 / MC58).